The chain runs to 424 residues: Adenylosuccinate synthetase (424 aa).

GTP is bound by residues 12–18 and 40–42; these read GDEGKGK and GHT. Residue aspartate 13 is the Proton acceptor of the active site. Residues aspartate 13 and glycine 40 each coordinate Mg(2+). IMP is bound by residues 13-16, 38-41, threonine 128, arginine 142, glutamine 223, threonine 238, and arginine 302; these read DEGK and NAGH. The active-site Proton donor is histidine 41. Position 298–304 (298–304) interacts with substrate; sequence TTTGRPR. GTP is bound by residues arginine 304, 330–332, and 412–414; these read HVD and GVG.

This sequence belongs to the adenylosuccinate synthetase family. In terms of assembly, homodimer. It depends on Mg(2+) as a cofactor.

It localises to the cytoplasm. The catalysed reaction is IMP + L-aspartate + GTP = N(6)-(1,2-dicarboxyethyl)-AMP + GDP + phosphate + 2 H(+). The protein operates within purine metabolism; AMP biosynthesis via de novo pathway; AMP from IMP: step 1/2. Its function is as follows. Plays an important role in the de novo pathway of purine nucleotide biosynthesis. Catalyzes the first committed step in the biosynthesis of AMP from IMP. The chain is Adenylosuccinate synthetase from Acetivibrio thermocellus (strain ATCC 27405 / DSM 1237 / JCM 9322 / NBRC 103400 / NCIMB 10682 / NRRL B-4536 / VPI 7372) (Clostridium thermocellum).